Consider the following 179-residue polypeptide: ATP-dependent protease subunit HslV (179 aa).

The active site involves Thr-8. Ser-164, Cys-167, and Thr-170 together coordinate Na(+).

The protein belongs to the peptidase T1B family. HslV subfamily. As to quaternary structure, a double ring-shaped homohexamer of HslV is capped on each side by a ring-shaped HslU homohexamer. The assembly of the HslU/HslV complex is dependent on binding of ATP.

It is found in the cytoplasm. The catalysed reaction is ATP-dependent cleavage of peptide bonds with broad specificity.. Its activity is regulated as follows. Allosterically activated by HslU binding. Functionally, protease subunit of a proteasome-like degradation complex believed to be a general protein degrading machinery. The sequence is that of ATP-dependent protease subunit HslV from Staphylococcus carnosus (strain TM300).